A 460-amino-acid polypeptide reads, in one-letter code: ATP synthase subunit beta (460 aa).

Residue 150-157 (GGAGVGKT) coordinates ATP.

The protein belongs to the ATPase alpha/beta chains family. In terms of assembly, F-type ATPases have 2 components, CF(1) - the catalytic core - and CF(0) - the membrane proton channel. CF(1) has five subunits: alpha(3), beta(3), gamma(1), delta(1), epsilon(1). CF(0) has three main subunits: a(1), b(2) and c(9-12). The alpha and beta chains form an alternating ring which encloses part of the gamma chain. CF(1) is attached to CF(0) by a central stalk formed by the gamma and epsilon chains, while a peripheral stalk is formed by the delta and b chains.

The protein resides in the cell inner membrane. It catalyses the reaction ATP + H2O + 4 H(+)(in) = ADP + phosphate + 5 H(+)(out). In terms of biological role, produces ATP from ADP in the presence of a proton gradient across the membrane. The catalytic sites are hosted primarily by the beta subunits. The sequence is that of ATP synthase subunit beta from Serratia proteamaculans (strain 568).